The following is a 109-amino-acid chain: Cell division suppressor protein YneA (109 aa).

Residues 39-90 form the LysM domain; sequence SEVDVNEGDSIWALADQYAAKSDMAKADFVSWVEKENNLTDGHVKAGDYVVI.

It belongs to the YneA family.

It is found in the cytoplasm. Functionally, inhibits cell division during the SOS response. Affects a later stage of the cell division protein assembly, after the assembly of the Z ring, by probably suppressing recruitment of FtsL and/or DivIC to the division machinery. In Listeria innocua serovar 6a (strain ATCC BAA-680 / CLIP 11262), this protein is Cell division suppressor protein YneA.